We begin with the raw amino-acid sequence, 105 residues long: SH3 domain-binding glutamic acid-rich-like protein 2 (105 aa).

The short motif at lysine 61–proline 67 is the SH3-binding element.

The protein belongs to the SH3BGR family.

It is found in the nucleus. This chain is SH3 domain-binding glutamic acid-rich-like protein 2 (sh3bgrl2), found in Danio rerio (Zebrafish).